A 145-amino-acid chain; its full sequence is MDESKKNERLKQLTDIQYNVTQKADTERPFQNEFYDNVAKGIYVDIVSGKPLFSSNDQYDAGCGWPSFTKPIDEAEVIEHRDLSHGMIRTEVKSVEADSHLGHVFPDGPQDQGGLRYCINSAALRFIPVDKLEEEGYQTYKKIFE.

A MsrB domain is found at Lys-6 to Val-129. Cys-118 acts as the Nucleophile in catalysis.

Belongs to the MsrB Met sulfoxide reductase family.

It catalyses the reaction L-methionyl-[protein] + [thioredoxin]-disulfide + H2O = L-methionyl-(R)-S-oxide-[protein] + [thioredoxin]-dithiol. In Listeria innocua serovar 6a (strain ATCC BAA-680 / CLIP 11262), this protein is Peptide methionine sulfoxide reductase MsrB.